The sequence spans 3393 residues: MVNPKGVNVMAARVKRAAQKTKKKAVQVSRGLRGFVLFVLTQLFMGRKLTPNVRRLWKSSDKNSLIHVLTKIKKIVGNLLMGVSRRKKRRSATTSGTVFMAMLGLTLAASVARHAHHTLINITKDDAHKLLTLRNGNCTVVATDIGNWCPDNVEYDCVTLQDNEDPDDVDCWCYRVNNVRVTYGRCKDGNTPRRSKRAVVITAHLDQGLTTKKETWLGSSHFETQVQKVEKWIIRNPTYAIAAILMSWYIGNSLKQRVVLLLLTLALGPAYATHCVGIPKRDFVQGVQGTTWVNLVLEQGGCVTIMAEGKPSVDVWMDNIKFTSPTLVRRISHTATISDTKIATACPSNGEAKLDEEHIKEYACKRLYSDRGWGNGCGLFGKGSLVACAKYESTGHMDVYEMDMTKVEYTVKTQVHSGAKSGDLSGVKTVSFAPTSGSQPVEFSGYGNMGLQCMIQSNVDFSTHYLVVMGNDAWLVHKAWVEDITLPWKHGEGGTWKDKQYMVEFGEPHATTVKVLALGPQEGALRNALAGAMIVTYESSGKTFKLHGGHVTCKATVSGLALKGTTYTNCRGGLSFVKTPTDTGHGTVVMQVKVAKSAPCRLTAIAADDASGHVNRGTLVTSNPIAASNNDEVMIEINPPYGTSYLIVGVGDDKLVYQWKKSGSTIGSLFSETVKGAQRMAIVGSSSWDFSSTSGFFSSVGKAIHTVFGTAFHGIFGGLSWMTRILIGVLLVWLGLNSRNGTATTLMMLTGFIILFLSLGVGAEVGCSVNWGQKELKCGDGIFVYNDVDDWMHKYKYHPEDPKVMAGLIAKAWEKGACGLTSVSELEHVMWVKIASEINAILEENEIDLTVVVHENKSVYRRGSRRFPRVETELTYGWESWGKNFITDGKVSNNTFHVDGKEDQCASKNRVWNSLEIEEFGFGVFHTNVFLRQKADKTNSCDTTLMGAAVKGNVAAHADPGFWMESQENNGTWEIQSIEFTAYRECEWPVSHTVHGTQVMESDMFMPKGIGGPVSHLNRMQGYKVQTNGAWAYGKTVVQRELCPDTSVVVDSSCSDRGKSIRSTTTEGKVIKEWCCRSCTLPPVSYWTSEGCWYAMEVRPMKTPEKHLVRSWVTAGDSYPAWSIGLVAMFLFVDIMARSRPTRKMMIGGTMLLLAIMIMGELSYLDLLRYIIVVGEHFIERENGGDVAYMAIMAASHLRPGLMAMVFAKSMWSPKQRVLLALGCAILQPFLTAQASALVWEWADSIGLVLLIVQGMVRNKEKNWALVLLALCSPVSMPVIRKASMIIGTGGLLLSLWKGGGSSMRKGLPLFAASAARVLGLTKAHLSVLFILLITKNGKRTWPISECLAAVGIFGAAFGTMFSEDETLLGPLALVGVVLIVYTMFTQSDGLELVKAADISWSDEAVVSGEARRFDVALNDSGEFKLLDEPPVSWLNVSFLVVAIVASSLHPIALVVTLVAWTYWRTEKRSGVLWDVPLAPKVEACEHLEDGVFRIIQKGLFGSSQVGIGVAKDGVFHTMWHVTRGAFLMHSGKQLTPTWGSVRKDLVCYGGTWKLDGAWNGVDEVQLIAVPPGKPATNVQTKPGTFVLPTGDEAGAVLLDFPSGTSGSPIIDRHGNILGLYGNGIVLENGAYASAISQAQPGSVAEVETPGLDKMLRKGEFTMLDYHPGAGKTRKHLPNILKECERKRLRTLVLAPTRVVLSEMKEALTSVQAKFHTQAFNSTTTGREIIDVMCHATFVHRMLEGLRSGNWEVIIMDEAHFLDPTSIAARGWAHHKSKTKESAVIFMTATPPGTSNEFPESNAEIEDVKKEIPSEPWSKGHEWILEDRRPTVWFLPSIKAANVMAACLRKAERSVVVLNRSTFENVYPTIKTKKPDFILATDIAEMGANLPVERVIDCRTAYKPVLVDERVALKGPLRIAAAAAAQRRGRVGRNPDRDGDTYVYSEDTCEQNDHLVCWTEGSMLLDNMQVKGGFVAPLYEEEASKTTMTPGECRLRDDQRKVFRTLIRKHDMPVWLSWQVAKSGLAADDRKWCFDGEDDNAILGDNGEVIKARSPGGQRKELKPRWSDARIASDNTSLMNFIAFAEGRRSLPLSILWSVPNQLSEKLVQSIDTLTILLRSEEGSRAHKLALQQAPEAVSTLLLLGMMAICTLGLVILLMKPKATDKMSMAMVTMAITGYLLKLGGMTHAQVGGILLVFFIMMVVIIPESGTQRSINDNKLAYVIILVGLVIGGVACNELGWLEKTKADLFGNNMTHAQTVVLPTINWNWLDFRPGAAWSLYVGMATFLTPVFVHWIKNEYGNASLTGITPTAGILGALNQGVPFVKLNTSVGVLLLSVWNNFTTSSMLAAMVMLACHCLFVLPGVRAQCLREAQIRVFHGVAKNPMVDGNPTVDLEKENDMPDLYEKKLALVALGMAAVLNAAMVRTALTTAEMVVLGSAAVGPLLEGNTSAFWNGPLAVAVAGVMRGNHYALIGIVYNLWLLKTARRGGSSALTYGEVWKRQLNLLGKQEFMNYKVSDILEVDRSHAREVLNSGNDAVGVAVSRGSSKLNWLIERGYLRPTGRVVDLGCGRGGWSYTCAAERQVTSVKAYTLGKEGHEKPRLIQSLGWNIIKFKDKSDITRMTPHASDTLLCDIGESSSNPEVEKERTLRVIEAVEKWMSPTTVSFCFKVLAPYKPDVIEALERFQLKHGGGIIRNPYSRNSTHEMYYVSGVRNNILHMVNSTSRMLMRRMSRPSGRSTVVPDLIYPTGTRSVASEAGPLDLEKVKARINRLKEEQESTWFVDSDHPYRTWHYHGSYVAKQSGTAASMINGVVKLLSGPWDRIEEVTNMAMTDTTPFGQQRVFKEKVDTRAPEPPQGTREIMKVVNQWLFDYLGRTKQPRICTKEEFINKVRSHAALGGILTEQEGWSSAAEAVADPRFWSLVDKERQAHLEGRCETCIYNMMGKREKKPSEFGRAKGSRAIWYMWLGARFLEFEALGFLNEDHWLGRENSKAGVEGIGLQYLGYVVEEVARKGNGLVYADDTAGWDTRITEADLEDEQYIMKRMSAEHRQLAWAVMELTYRNKVVKVPRPGPGGKILMDVISRRDQRGSGQVVTYPLNTATNMKVQLIRMAEAENVITRNDVEKVSLITLKELQLWLEVNGVNRLERMAVSGDDCIVAPVDESFAGALHHLNAMSKTRKDISEWENSRGWTDWESVPFCSHHFHTLYLKDGRTIIAPCRCQDELIGRARISPGNGWMIKETAGLSKAYTQMWTLMYFHRRDLRLMANAICSAVPIDWVPTGRTTWSIHATGEWMSSDDMLEVWNKVWIQDNPHVKDKTPIFAWRDVPYIQKGQDRACGSLVGTSLRASWAESIMTSVHRVRMLIGNERYVNYMESMDRYATQRCSAYGELL.

The Cytoplasmic portion of the chain corresponds to 1-91; sequence MVNPKGVNVM…GVSRRKKRRS (91 aa). Positions 28–60 are hydrophobic; homodimerization of capsid protein C; the sequence is VSRGLRGFVLFVLTQLFMGRKLTPNVRRLWKSS. Residues 91 to 108 constitute a propeptide, ER anchor for the capsid protein C, removed in mature form by serine protease NS3; it reads SATTSGTVFMAMLGLTLA. A helical membrane pass occupies residues 92 to 112; it reads ATTSGTVFMAMLGLTLAASVA. Topologically, residues 113 to 231 are extracellular; it reads RHAHHTLINI…FETQVQKVEK (119 aa). 2 N-linked (GlcNAc...) asparagine; by host glycosylation sites follow: asparagine 121 and asparagine 137. Residues 232-252 traverse the membrane as a helical segment; that stretch reads WIIRNPTYAIAAILMSWYIGN. The Cytoplasmic segment spans residues 253-257; sequence SLKQR. The helical transmembrane segment at 258-272 threads the bilayer; it reads VVLLLLTLALGPAYA. The Extracellular portion of the chain corresponds to 273–713; it reads THCVGIPKRD…IHTVFGTAFH (441 aa). 5 disulfide bridges follow: cysteine 275–cysteine 302, cysteine 346–cysteine 377, cysteine 364–cysteine 388, cysteine 453–cysteine 553, and cysteine 570–cysteine 600. The fusion peptide stretch occupies residues 370 to 383; that stretch reads DRGWGNGCGLFGKG. The helical transmembrane segment at 714–734 threads the bilayer; sequence GIFGGLSWMTRILIGVLLVWL. At 735–745 the chain is on the cytoplasmic side; it reads GLNSRNGTATT. A helical transmembrane segment spans residues 746–763; that stretch reads LMMLTGFIILFLSLGVGA. Over 764-1112 the chain is Extracellular; that stretch reads EVGCSVNWGQ…TPEKHLVRSW (349 aa). 8 disulfides stabilise this stretch: cysteine 767/cysteine 778, cysteine 818/cysteine 905, cysteine 941/cysteine 986, cysteine 1043/cysteine 1092, cysteine 1054/cysteine 1075, cysteine 1054/cysteine 1076, cysteine 1075/cysteine 1079, and cysteine 1076/cysteine 1079. N-linked (GlcNAc...) asparagine; by host glycans are attached at residues asparagine 893 and asparagine 970. The helical transmembrane segment at 1113–1133 threads the bilayer; that stretch reads VTAGDSYPAWSIGLVAMFLFV. The Cytoplasmic portion of the chain corresponds to 1134–1186; it reads DIMARSRPTRKMMIGGTMLLLAIMIMGELSYLDLLRYIIVVGEHFIERENGGD. A helical transmembrane segment spans residues 1187–1207; the sequence is VAYMAIMAASHLRPGLMAMVF. The Lumenal segment spans residues 1208–1283; the sequence is AKSMWSPKQR…PVSMPVIRKA (76 aa). The helical transmembrane segment at 1284–1304 threads the bilayer; that stretch reads SMIIGTGGLLLSLWKGGGSSM. Residues 1305–1341 lie on the Cytoplasmic side of the membrane; it reads RKGLPLFAASAARVLGLTKAHLSVLFILLITKNGKRT. Residues 1342-1362 traverse the membrane as a helical segment; that stretch reads WPISECLAAVGIFGAAFGTMF. Residues 1363–1365 are Lumenal-facing; that stretch reads SED. The helical transmembrane segment at 1366–1386 threads the bilayer; it reads ETLLGPLALVGVVLIVYTMFT. At 1387–1438 the chain is on the cytoplasmic side; that stretch reads QSDGLELVKAADISWSDEAVVSGEARRFDVALNDSGEFKLLDEPPVSWLNVS. Positions 1393-1432 are interacts with and activates NS3 protease; sequence LVKAADISWSDEAVVSGEARRFDVALNDSGEFKLLDEPPV. An intramembrane region (helical) is located at residues 1439–1459; sequence FLVVAIVASSLHPIALVVTLV. Topologically, residues 1460–2137 are cytoplasmic; sequence AWTYWRTEKR…KLALQQAPEA (678 aa). Residues 1470–1649 enclose the Peptidase S7 domain; the sequence is SGVLWDVPLA…QPGSVAEVET (180 aa). Active-site charge relay system; for serine protease NS3 activity residues include histidine 1521, aspartate 1545, and serine 1606. The Helicase ATP-binding domain occupies 1653 to 1809; the sequence is DKMLRKGEFT…ESNAEIEDVK (157 aa). Residues 1657–1660 are important for RNA-binding; the sequence is RKGE. 1666 to 1673 serves as a coordination point for ATP; the sequence is YHPGAGKT. The DEAH box signature appears at 1757–1760; the sequence is DEAH. A Helicase C-terminal domain is found at 1804–1984; the sequence is EIEDVKKEIP…VAPLYEEEAS (181 aa). A helical transmembrane segment spans residues 2138–2158; it reads VSTLLLLGMMAICTLGLVILL. At 2159–2168 the chain is on the lumenal side; it reads MKPKATDKMS. The helical intramembrane region spans 2169 to 2184; that stretch reads MAMVTMAITGYLLKLG. A topological domain (lumenal) is located at residue glycine 2185. Residues 2186–2206 traverse the membrane as a helical segment; that stretch reads MTHAQVGGILLVFFIMMVVII. Residues 2207–2221 lie on the Cytoplasmic side of the membrane; it reads PESGTQRSINDNKLA. A helical transmembrane segment spans residues 2222–2236; sequence YVIILVGLVIGGVAC. The Lumenal portion of the chain corresponds to 2237 to 2275; it reads NELGWLEKTKADLFGNNMTHAQTVVLPTINWNWLDFRPG. Residues 2276-2296 constitute an intramembrane region (helical); it reads AAWSLYVGMATFLTPVFVHWI. Over 2297–2344 the chain is Lumenal; the sequence is KNEYGNASLTGITPTAGILGALNQGVPFVKLNTSVGVLLLSVWNNFTT. The helical transmembrane segment at 2345–2365 threads the bilayer; it reads SSMLAAMVMLACHCLFVLPGV. Topologically, residues 2366 to 2408 are cytoplasmic; sequence RAQCLREAQIRVFHGVAKNPMVDGNPTVDLEKENDMPDLYEKK. Residues 2409 to 2429 form a helical membrane-spanning segment; the sequence is LALVALGMAAVLNAAMVRTAL. The Lumenal segment spans residues 2430–2457; sequence TTAEMVVLGSAAVGPLLEGNTSAFWNGP. A helical membrane pass occupies residues 2458-2478; sequence LAVAVAGVMRGNHYALIGIVY. The Cytoplasmic segment spans residues 2479 to 3393; sequence NLWLLKTARR…QRCSAYGELL (915 aa). The 265-residue stretch at 2489-2753 folds into the mRNA cap 0-1 NS5-type MT domain; the sequence is GGSSALTYGE…DLIYPTGTRS (265 aa). Serine 2544 contacts S-adenosyl-L-methionine. Position 2544 is a phosphoserine (serine 2544). The active-site For 2'-O-MTase activity is the lysine 2549. S-adenosyl-L-methionine contacts are provided by glycine 2574, tryptophan 2575, threonine 2592, leucine 2593, aspartate 2619, and isoleucine 2620. Aspartate 2634 functions as the For 2'-O-MTase activity in the catalytic mechanism. Residue isoleucine 2635 coordinates S-adenosyl-L-methionine. Active-site for 2'-O-MTase activity residues include lysine 2670 and glutamate 2706. Tyrosine 2708 is an S-adenosyl-L-methionine binding site. Residues 2860–2893 carry the Nuclear localization signal motif; that stretch reads REIMKVVNQWLFDYLGRTKQPRICTKEEFINKVR. Residues glutamate 2927, histidine 2931, cysteine 2936, and cysteine 2939 each coordinate Zn(2+). The RdRp catalytic domain occupies 3017-3169; that stretch reads GLVYADDTAG…APVDESFAGA (153 aa). Positions 3204, 3220, and 3339 each coordinate Zn(2+).

In the N-terminal section; belongs to the class I-like SAM-binding methyltransferase superfamily. mRNA cap 0-1 NS5-type methyltransferase family. Homodimer. Interacts (via N-terminus) with host EXOC1 (via C-terminus); this interaction results in EXOC1 degradation through the proteasome degradation pathway. In terms of assembly, forms heterodimers with envelope protein E in the endoplasmic reticulum and Golgi. As to quaternary structure, homodimer; in the endoplasmic reticulum and Golgi. Interacts with protein prM. Interacts with non-structural protein 1. Homodimer; Homohexamer when secreted. Interacts with envelope protein E. In terms of assembly, interacts (via N-terminus) with serine protease NS3. As to quaternary structure, forms a heterodimer with serine protease NS3. May form homooligomers. Forms a heterodimer with NS2B. Interacts with non-structural protein 2A (via N-terminus). Interacts with NS4B. Interacts with unphosphorylated RNA-directed RNA polymerase NS5; this interaction stimulates RNA-directed RNA polymerase NS5 guanylyltransferase activity. NS3 interacts with host PDCD6IP; this interaction contributes to virion release. In terms of assembly, interacts with serine protease NS3. As to quaternary structure, homodimer. Interacts with host STAT2; this interaction prevents the establishment of cellular antiviral state. Interacts with host TRIM23; this interaction leads to NS5 ubiquitination. Specific enzymatic cleavages in vivo yield mature proteins. The nascent capsid protein C contains a C-terminal hydrophobic domain that act as a signal sequence for translocation of prM into the lumen of the ER. Mature capsid protein C is cleaved at a site upstream of this hydrophobic domain by NS3. prM is cleaved in post-Golgi vesicles by a host furin, releasing the mature small envelope protein M, and peptide pr. Non-structural protein 2A-alpha, a C-terminally truncated form of non-structural protein 2A, results from partial cleavage by NS3. Specific enzymatic cleavages in vivo yield mature proteins peptide 2K acts as a signal sequence and is removed from the N-terminus of NS4B by the host signal peptidase in the ER lumen. Signal cleavage at the 2K-4B site requires a prior NS3 protease-mediated cleavage at the 4A-2K site. In terms of processing, cleaved in post-Golgi vesicles by a host furin, releasing the mature small envelope protein M, and peptide pr. This cleavage is incomplete as up to 30% of viral particles still carry uncleaved prM. Post-translationally, N-glycosylated. N-glycosylated. The excreted form is glycosylated and this is required for efficient secretion of the protein from infected cells. In terms of processing, polyubiquitinated; ubiquitination is probably mediated by host TRIM23 and is prerequisite for NS5-STAT2 interaction. NS5 is not ISGylated or sumoylated. Post-translationally, phosphorylated on serines residues. This phosphorylation may trigger NS5 nuclear localization.

The protein localises to the virion. It localises to the host nucleus. It is found in the host cytoplasm. The protein resides in the host perinuclear region. Its subcellular location is the secreted. The protein localises to the virion membrane. It localises to the host endoplasmic reticulum membrane. The catalysed reaction is Selective hydrolysis of -Xaa-Xaa-|-Yaa- bonds in which each of the Xaa can be either Arg or Lys and Yaa can be either Ser or Ala.. The enzyme catalyses RNA(n) + a ribonucleoside 5'-triphosphate = RNA(n+1) + diphosphate. It catalyses the reaction a ribonucleoside 5'-triphosphate + H2O = a ribonucleoside 5'-diphosphate + phosphate + H(+). It carries out the reaction ATP + H2O = ADP + phosphate + H(+). The catalysed reaction is a 5'-end (5'-triphosphoguanosine)-ribonucleoside in mRNA + S-adenosyl-L-methionine = a 5'-end (N(7)-methyl 5'-triphosphoguanosine)-ribonucleoside in mRNA + S-adenosyl-L-homocysteine. The enzyme catalyses a 5'-end (N(7)-methyl 5'-triphosphoguanosine)-ribonucleoside in mRNA + S-adenosyl-L-methionine = a 5'-end (N(7)-methyl 5'-triphosphoguanosine)-(2'-O-methyl-ribonucleoside) in mRNA + S-adenosyl-L-homocysteine + H(+). Functionally, plays a role in virus budding by binding to the cell membrane and gathering the viral RNA into a nucleocapsid that forms the core of a mature virus particle. During virus entry, may induce genome penetration into the host cytoplasm after hemifusion induced by the surface proteins. Can migrate to the cell nucleus where it modulates host functions. Inhibits RNA silencing by interfering with host Dicer. Its function is as follows. Prevents premature fusion activity of envelope proteins in trans-Golgi by binding to envelope protein E at pH6.0. After virion release in extracellular space, gets dissociated from E dimers. In terms of biological role, acts as a chaperone for envelope protein E during intracellular virion assembly by masking and inactivating envelope protein E fusion peptide. prM is the only viral peptide matured by host furin in the trans-Golgi network probably to avoid catastrophic activation of the viral fusion activity in acidic Golgi compartment prior to virion release. prM-E cleavage is inefficient, and many virions are only partially matured. These uncleaved prM would play a role in immune evasion. Functionally, may play a role in virus budding. Exerts cytotoxic effects by activating a mitochondrial apoptotic pathway through M ectodomain. May display a viroporin activity. Binds to host cell surface receptor and mediates fusion between viral and cellular membranes. Envelope protein is synthesized in the endoplasmic reticulum in the form of heterodimer with protein prM. They play a role in virion budding in the ER, and the newly formed immature particle is covered with 60 spikes composed of heterodimer between precursor prM and envelope protein E. The virion is transported to the Golgi apparatus where the low pH causes dissociation of PrM-E heterodimers and formation of E homodimers. prM-E cleavage is inefficient, and many virions are only partially matured. These uncleaved prM would play a role in immune evasion. Its function is as follows. Involved in immune evasion, pathogenesis and viral replication. Once cleaved off the polyprotein, is targeted to three destinations: the viral replication cycle, the plasma membrane and the extracellular compartment. Essential for viral replication. Required for formation of the replication complex and recruitment of other non-structural proteins to the ER-derived membrane structures. Excreted as a hexameric lipoparticle that plays a role against host immune response. Antagonizing the complement function. Binds to the host macrophages and dendritic cells. Inhibits signal transduction originating from Toll-like receptor 3 (TLR3). In terms of biological role, component of the viral RNA replication complex that functions in virion assembly and antagonizes the host immune response. Functionally, required cofactor for the serine protease function of NS3. May have membrane-destabilizing activity and form viroporins. Displays three enzymatic activities: serine protease, NTPase and RNA helicase. NS3 serine protease, in association with NS2B, performs its autocleavage and cleaves the polyprotein at dibasic sites in the cytoplasm: C-prM, NS2A-NS2B, NS2B-NS3, NS3-NS4A, NS4A-2K and NS4B-NS5. NS3 RNA helicase binds RNA and unwinds dsRNA in the 3' to 5' direction. Also plays a role in virus assembly. Its function is as follows. Regulates the ATPase activity of the NS3 helicase activity. NS4A allows NS3 helicase to conserve energy during unwinding. In terms of biological role, functions as a signal peptide for NS4B and is required for the interferon antagonism activity of the latter. Functionally, induces the formation of ER-derived membrane vesicles where the viral replication takes place. Inhibits interferon (IFN)-induced host STAT1 phosphorylation and nuclear translocation, thereby preventing the establishment of cellular antiviral state by blocking the IFN-alpha/beta pathway. Replicates the viral (+) and (-) RNA genome, and performs the capping of genomes in the cytoplasm. NS5 methylates viral RNA cap at guanine N-7 and ribose 2'-O positions. Besides its role in RNA genome replication, also prevents the establishment of cellular antiviral state by blocking the interferon-alpha/beta (IFN-alpha/beta) signaling pathway. IFN-I induces binding of NS5 to host IFN-activated transcription factor STAT2, preventing its transcriptional activity. Host TRIM23 is the E3 ligase that interacts with and polyubiquitinates NS5 to promote its binding to STAT2 and trigger IFN-I signaling inhibition. This Banzi virus (BANV) protein is Genome polyprotein.